We begin with the raw amino-acid sequence, 469 residues long: MNRLLKQVCMVVVSSFMMASMLTHAASLPDFTELVEKASPAVVNISTEQTVTTKTANEGGQQLGPNSEELNEFFKHFFGQQPFGQQAPPQQGQRSSLGSGFIISHDGYVLTNNHVIDGADVIHVRLNDRREYVAKLVGTDPRTDLALLKIEADDLPIVKMGDSDKLKPGQWVLAIGSPFGFDYTVTAGIVSATGRSLPSDNYVPFIQTDVAINPGNSGGPLFNLDGEVVGINSQIYTRSGGFMGVSFAIPSKVAMSVVDQLKSDGKVSRAWLGVLIQDVNNELAESFGLDRSNGALISRVLPDSPAEKAGLKSGDIILEFNGQSIAHSGELPYIVGQMKADEKVDAKVYRDGKEQTISVTLEARPNDPKVVAQSQQDQNRLGMIVGEVPADMAKKFEIDNGVVIEQVLGGTAARNGLQQGDVITMLNGKRITSVAEFAKIAKDIPSGRSVPMRVIRQGYPMFIPFKIMD.

Positions 1-25 are cleaved as a signal peptide; sequence MNRLLKQVCMVVVSSFMMASMLTHA. Residues H114, D144, and S217 each act as charge relay system in the active site. Substrate contacts are provided by residues 215–217 and 272–276; these read GNS and LGVLI. PDZ domains are found at residues 261-352 and 358-458; these read LKSD…YRDG and SVTL…IRQG.

The protein belongs to the peptidase S1C family.

The protein localises to the periplasm. It carries out the reaction Acts on substrates that are at least partially unfolded. The cleavage site P1 residue is normally between a pair of hydrophobic residues, such as Val-|-Val.. Its function is as follows. Might be efficient in the degradation of transiently denatured and unfolded proteins which accumulate in the periplasm following stress conditions. The sequence is that of Probable periplasmic serine endoprotease DegP-like from Marinomonas sp. (strain MWYL1).